The chain runs to 552 residues: Macrophage colony-stimulating factor 1 (552 aa).

A signal peptide spans 1 to 32 (MTARGAAGRCPSSTWLGSRLLLVCLLMSRSIA). At 33-492 (KEVSEHCSHM…EGSSDPQIPE (460 aa)) the chain is on the extracellular side. Cystine bridges form between cysteine 39-cysteine 122, cysteine 80-cysteine 171, and cysteine 134-cysteine 178. N-linked (GlcNAc...) asparagine glycans are attached at residues asparagine 107, asparagine 154, and asparagine 172. Residues 197 to 207 (TPSSDPASASP) are compositionally biased toward low complexity. A disordered region spans residues 197–293 (TPSSDPASAS…GGPVPGVEDI (97 aa)). Over residues 254–267 (PRSTCQTLESTEQP) the composition is skewed to polar residues. A compositionally biased stretch (basic and acidic residues) spans 268-278 (NHGDRLTEDSQ). A glycan (O-linked (Xyl...) (chondroitin sulfate) serine) is linked at serine 308. Disordered regions lie at residues 321 to 412 (KFSP…RVSN) and 439 to 465 (GKRS…ARPV). Basic and acidic residues-rich tracts occupy residues 350–364 (STED…DRPL), 382–396 (EKTD…DHQE), and 439–450 (GKRSTRDRRSPA). Threonine 360 carries O-linked (GalNAc...) threonine glycosylation. The helical transmembrane segment at 493 to 515 (SVFHLLVPGIILVLLTVGGLLFY) threads the bilayer. The Cytoplasmic segment spans residues 516–552 (KWKWRSHRDPQTLDSSVGRPEDSSLTQDEDRQVELPV). The tract at residues 525 to 552 (PQTLDSSVGRPEDSSLTQDEDRQVELPV) is disordered. The span at 543–552 (DEDRQVELPV) shows a compositional bias: basic and acidic residues.

As to quaternary structure, homodimer or heterodimer; disulfide-linked. Likely to exist in multiple forms: homodimer consisting of 2 identical 150-200 kDa proteoglycan subunits, heterodimer consisting of a 150-200 kDa proteoglycan subunit and a truncated 43 kDa subunit, and homodimer consisting of 2 identical 43 kDa subunits. Interacts with CSF1R. N-glycosylated. In terms of processing, O-glycosylated; contains chondroitin sulfate.

The protein localises to the cell membrane. It localises to the secreted. The protein resides in the extracellular space. Its function is as follows. Cytokine that plays an essential role in the regulation of survival, proliferation and differentiation of hematopoietic precursor cells, especially mononuclear phagocytes, such as macrophages and monocytes. Promotes the release of pro-inflammatory chemokines, and thereby plays an important role in innate immunity and in inflammatory processes. Plays an important role in the regulation of osteoclast proliferation and differentiation, the regulation of bone resorption, and is required for normal bone development. Required for normal male and female fertility. Promotes reorganization of the actin cytoskeleton, regulates formation of membrane ruffles, cell adhesion and cell migration. Plays a role in lipoprotein clearance. The polypeptide is Macrophage colony-stimulating factor 1 (Csf1) (Mus musculus (Mouse)).